The following is a 448-amino-acid chain: Methionine aminopeptidase 2 (448 aa).

Residues methionine 1–aspartate 47 are disordered. The segment covering lysine 24–serine 34 has biased composition (basic residues). Histidine 198 provides a ligand contact to substrate. 3 residues coordinate a divalent metal cation: aspartate 218, aspartate 229, and histidine 298. Histidine 306 is a binding site for substrate. A divalent metal cation is bound by residues glutamate 331 and glutamate 429.

Belongs to the peptidase M24A family. Methionine aminopeptidase eukaryotic type 2 subfamily. It depends on Co(2+) as a cofactor. Zn(2+) serves as cofactor. The cofactor is Mn(2+). Fe(2+) is required as a cofactor.

It is found in the cytoplasm. The catalysed reaction is Release of N-terminal amino acids, preferentially methionine, from peptides and arylamides.. In terms of biological role, cotranslationally removes the N-terminal methionine from nascent proteins. The N-terminal methionine is often cleaved when the second residue in the primary sequence is small and uncharged (Met-Ala-, Cys, Gly, Pro, Ser, Thr, or Val). The sequence is that of Methionine aminopeptidase 2 from Komagataella phaffii (strain GS115 / ATCC 20864) (Yeast).